Here is a 151-residue protein sequence, read N- to C-terminus: Large ribosomal subunit protein bL9 (151 aa).

The protein belongs to the bacterial ribosomal protein bL9 family.

Binds to the 23S rRNA. The polypeptide is Large ribosomal subunit protein bL9 (Thermosipho africanus (strain TCF52B)).